The chain runs to 329 residues: Phenylalanine--tRNA ligase alpha subunit (329 aa).

The protein belongs to the class-II aminoacyl-tRNA synthetase family. Phe-tRNA synthetase alpha subunit type 1 subfamily. In terms of assembly, tetramer of two alpha and two beta subunits. Mg(2+) is required as a cofactor.

It is found in the cytoplasm. It carries out the reaction tRNA(Phe) + L-phenylalanine + ATP = L-phenylalanyl-tRNA(Phe) + AMP + diphosphate + H(+). In Buchnera aphidicola subsp. Schizaphis graminum (strain Sg), this protein is Phenylalanine--tRNA ligase alpha subunit (pheS).